Here is a 634-residue protein sequence, read N- to C-terminus: DNA-directed RNA polymerase subunit gamma (634 aa).

Zn(2+) contacts are provided by Cys74, Cys76, Cys89, and Cys92. Mg(2+)-binding residues include Asp471, Asp473, and Asp475.

It belongs to the RNA polymerase beta' chain family. RpoC1 subfamily. As to quaternary structure, in cyanobacteria the RNAP catalytic core is composed of 2 alpha, 1 beta, 1 beta', 1 gamma and 1 omega subunit. When a sigma factor is associated with the core the holoenzyme is formed, which can initiate transcription. It depends on Mg(2+) as a cofactor. Zn(2+) is required as a cofactor.

The enzyme catalyses RNA(n) + a ribonucleoside 5'-triphosphate = RNA(n+1) + diphosphate. Functionally, DNA-dependent RNA polymerase catalyzes the transcription of DNA into RNA using the four ribonucleoside triphosphates as substrates. The chain is DNA-directed RNA polymerase subunit gamma from Prochlorococcus marinus (strain MIT 9312).